The chain runs to 201 residues: Ribonuclease HII (201 aa).

Positions 12-201 (DLVAGVDEVG…VRELLDVSVQ (190 aa)) constitute an RNase H type-2 domain. 3 residues coordinate a divalent metal cation: Asp-18, Glu-19, and Asp-110.

Belongs to the RNase HII family. Mn(2+) is required as a cofactor. The cofactor is Mg(2+).

It localises to the cytoplasm. The enzyme catalyses Endonucleolytic cleavage to 5'-phosphomonoester.. Functionally, endonuclease that specifically degrades the RNA of RNA-DNA hybrids. In Pseudomonas aeruginosa (strain LESB58), this protein is Ribonuclease HII.